Reading from the N-terminus, the 1593-residue chain is Autotransporter CRAC (1593 aa).

The first 54 residues, 1–54 (MNKVYNTVWNESTGMWVVTSELTRKGGRRPRQIRRTALAGLIAGLLLPSAPALA), serve as a signal peptide directing secretion. Positions 65–85 (GATSSSMSLNAGDTATDTTIN) are enriched in polar residues. Disordered stretches follow at residues 65–100 (GATS…SATS) and 1267–1286 (KADS…PVPP). The span at 86 to 97 (SGGSQRVSSGGS) shows a compositional bias: low complexity. Residues 1269 to 1280 (DSSQPGTDNPGT) show a composition bias toward polar residues. The region spanning 1325 to 1593 (NTRSPGGVWG…TGSVGFRINF (269 aa)) is the Autotransporter domain.

Post-translationally, glycosylated by heptosyltransferas BAHTCr. Glycosylation is required for adhesion to mammalian cells and colonization of the mouse host gastrointestinal tract.

It is found in the cell outer membrane. In terms of biological role, autotransporter required for the colonization of the mouse host gastrointestinal tract, possibly by mediating bacteria adhesion to host cells. The polypeptide is Autotransporter CRAC (Citrobacter rodentium (strain ICC168) (Citrobacter freundii biotype 4280)).